Here is an 820-residue protein sequence, read N- to C-terminus: Leucine--tRNA ligase (820 aa).

The short motif at 42–52 (PYPSGDLHMGH) is the 'HIGH' region element. Residues 576–580 (KMSKS) carry the 'KMSKS' region motif. Position 579 (lysine 579) interacts with ATP.

The protein belongs to the class-I aminoacyl-tRNA synthetase family.

Its subcellular location is the cytoplasm. The catalysed reaction is tRNA(Leu) + L-leucine + ATP = L-leucyl-tRNA(Leu) + AMP + diphosphate. This Coxiella burnetii (strain CbuK_Q154) (Coxiella burnetii (strain Q154)) protein is Leucine--tRNA ligase.